The sequence spans 384 residues: Chorismate synthase (384 aa).

The NADP(+) site is built by arginine 40 and arginine 46. FMN is bound by residues 128–130 (RAS), glycine 292, 307–311 (KPIPT), and arginine 333.

This sequence belongs to the chorismate synthase family. In terms of assembly, homotetramer. FMNH2 serves as cofactor.

It catalyses the reaction 5-O-(1-carboxyvinyl)-3-phosphoshikimate = chorismate + phosphate. It functions in the pathway metabolic intermediate biosynthesis; chorismate biosynthesis; chorismate from D-erythrose 4-phosphate and phosphoenolpyruvate: step 7/7. Functionally, catalyzes the anti-1,4-elimination of the C-3 phosphate and the C-6 proR hydrogen from 5-enolpyruvylshikimate-3-phosphate (EPSP) to yield chorismate, which is the branch point compound that serves as the starting substrate for the three terminal pathways of aromatic amino acid biosynthesis. This reaction introduces a second double bond into the aromatic ring system. The sequence is that of Chorismate synthase from Carboxydothermus hydrogenoformans (strain ATCC BAA-161 / DSM 6008 / Z-2901).